The sequence spans 274 residues: Thiamine kinase (274 aa).

Belongs to the thiamine kinase family.

The enzyme catalyses thiamine + ATP = thiamine phosphate + ADP + H(+). Its pathway is cofactor biosynthesis; thiamine diphosphate biosynthesis; thiamine phosphate from thiamine: step 1/1. Its function is as follows. Catalyzes the ATP-dependent phosphorylation of thiamine to thiamine phosphate. Is involved in thiamine salvage. This is Thiamine kinase from Salmonella heidelberg (strain SL476).